We begin with the raw amino-acid sequence, 540 residues long: Phosphoenolpyruvate carboxykinase (ATP) (540 aa).

R65 provides a ligand contact to substrate. K87 is modified (N6-acetyllysine). Y207 and K213 together coordinate substrate. Residues K213, H232, and 248-256 (GLSGTGKTT) contribute to the ATP site. Mn(2+) contacts are provided by K213 and H232. Residue D269 participates in Mn(2+) binding. ATP-binding positions include E297, R333, 449–450 (RI), and T455. Substrate is bound at residue R333. K523 carries the post-translational modification N6-acetyllysine.

This sequence belongs to the phosphoenolpyruvate carboxykinase (ATP) family. Monomer. Mn(2+) is required as a cofactor.

It localises to the cytoplasm. The enzyme catalyses oxaloacetate + ATP = phosphoenolpyruvate + ADP + CO2. It functions in the pathway carbohydrate biosynthesis; gluconeogenesis. In terms of biological role, involved in the gluconeogenesis. Catalyzes the conversion of oxaloacetate (OAA) to phosphoenolpyruvate (PEP) through direct phosphoryl transfer between the nucleoside triphosphate and OAA. The chain is Phosphoenolpyruvate carboxykinase (ATP) from Escherichia coli O45:K1 (strain S88 / ExPEC).